The following is a 231-amino-acid chain: Putative 3-methyladenine DNA glycosylase (231 aa).

This sequence belongs to the DNA glycosylase MPG family.

This Pseudomonas fluorescens (strain Pf0-1) protein is Putative 3-methyladenine DNA glycosylase.